Reading from the N-terminus, the 431-residue chain is Glutamate-1-semialdehyde 2,1-aminomutase (431 aa).

The residue at position 269 (Lys-269) is an N6-(pyridoxal phosphate)lysine.

The protein belongs to the class-III pyridoxal-phosphate-dependent aminotransferase family. HemL subfamily. In terms of assembly, homodimer. Pyridoxal 5'-phosphate is required as a cofactor.

It is found in the cytoplasm. The catalysed reaction is (S)-4-amino-5-oxopentanoate = 5-aminolevulinate. Its pathway is porphyrin-containing compound metabolism; protoporphyrin-IX biosynthesis; 5-aminolevulinate from L-glutamyl-tRNA(Glu): step 2/2. It participates in porphyrin-containing compound metabolism; chlorophyll biosynthesis. The sequence is that of Glutamate-1-semialdehyde 2,1-aminomutase from Chlorobium limicola (strain DSM 245 / NBRC 103803 / 6330).